An 88-amino-acid polypeptide reads, in one-letter code: Small ribosomal subunit protein bS18 (88 aa).

It belongs to the bacterial ribosomal protein bS18 family. Part of the 30S ribosomal subunit. Forms a tight heterodimer with protein bS6.

Its function is as follows. Binds as a heterodimer with protein bS6 to the central domain of the 16S rRNA, where it helps stabilize the platform of the 30S subunit. In Syntrophus aciditrophicus (strain SB), this protein is Small ribosomal subunit protein bS18.